A 228-amino-acid polypeptide reads, in one-letter code: Large ribosomal subunit protein mL64 (228 aa).

Disordered regions lie at residues 20-44 (PRSR…DREN) and 186-228 (QRKR…KPSS). Residues 98-207 (TMQESLRVQQ…KKEARIAAMA (110 aa)) adopt a coiled-coil conformation. The short motif at 184-200 (KQQRKRLKEERQRQKKE) is the Nuclear localization signal element. Over residues 186 to 202 (QRKRLKEERQRQKKEAR) the composition is skewed to basic and acidic residues. Over residues 212 to 228 (QDSAEAQDSAASGKPSS) the composition is skewed to low complexity.

Belongs to the mitochondrion-specific ribosomal protein mL64 family. Component of the mitochondrial ribosome large subunit (39S) which comprises a 16S rRNA and about 50 distinct proteins. Interacts with GADD45A, GADD45B and GADD45G. Interacts with NR4A1 via the NR4A1 AB domain. Interacts with ATAD3A and ATAD3B.

The protein localises to the mitochondrion. It localises to the nucleus. Functionally, acts as a negative regulator of G1 to S cell cycle phase progression by inhibiting cyclin-dependent kinases. Inhibitory effects are additive with GADD45 proteins but also occur in the absence of GADD45 proteins. Acts as a repressor of the orphan nuclear receptor NR4A1 by inhibiting AB domain-mediated transcriptional activity. May be involved in the hormone-mediated regulation of NR4A1 transcriptional activity. May play a role in mitochondrial protein synthesis. The sequence is that of Large ribosomal subunit protein mL64 (Gadd45gip1) from Rattus norvegicus (Rat).